Consider the following 403-residue polypeptide: Aminomethyltransferase, mitochondrial (403 aa).

The N-terminal 28 residues, 1 to 28, are a transit peptide targeting the mitochondrion; the sequence is MQRAVSVVARLGFRLQAFPPALCRPLSC. Substrate-binding residues include glutamate 232, arginine 261, and tyrosine 399.

The protein belongs to the GcvT family. The glycine cleavage system is composed of four proteins: P, T, L and H.

The protein localises to the mitochondrion. The enzyme catalyses N(6)-[(R)-S(8)-aminomethyldihydrolipoyl]-L-lysyl-[protein] + (6S)-5,6,7,8-tetrahydrofolate = N(6)-[(R)-dihydrolipoyl]-L-lysyl-[protein] + (6R)-5,10-methylene-5,6,7,8-tetrahydrofolate + NH4(+). In terms of biological role, the glycine cleavage system catalyzes the degradation of glycine. The protein is Aminomethyltransferase, mitochondrial of Homo sapiens (Human).